A 66-amino-acid polypeptide reads, in one-letter code: MPQLDTSTWLTMILSMFLTLFIIFQLKISKHNFYYNPELTSTKMLKQNTPWETKWTKIYLPLLLPL.

Residues 8-24 traverse the membrane as a helical segment; the sequence is TWLTMILSMFLTLFIIF. At Lys54 the chain carries N6-acetyllysine; alternate. Lys54 carries the post-translational modification N6-succinyllysine; alternate. Residue Lys57 is modified to N6-acetyllysine.

This sequence belongs to the ATPase protein 8 family. As to quaternary structure, component of the ATP synthase complex composed at least of ATP5F1A/subunit alpha, ATP5F1B/subunit beta, ATP5MC1/subunit c (homooctomer), MT-ATP6/subunit a, MT-ATP8/subunit 8, ATP5ME/subunit e, ATP5MF/subunit f, ATP5MG/subunit g, ATP5MK/subunit k, ATP5MJ/subunit j, ATP5F1C/subunit gamma, ATP5F1D/subunit delta, ATP5F1E/subunit epsilon, ATP5PF/subunit F6, ATP5PB/subunit b, ATP5PD/subunit d, ATP5PO/subunit OSCP. ATP synthase complex consists of a soluble F(1) head domain (subunits alpha(3) and beta(3)) - the catalytic core - and a membrane F(0) domain - the membrane proton channel (subunits c, a, 8, e, f, g, k and j). These two domains are linked by a central stalk (subunits gamma, delta, and epsilon) rotating inside the F1 region and a stationary peripheral stalk (subunits F6, b, d, and OSCP). Interacts with PRICKLE3.

Its subcellular location is the mitochondrion membrane. Its function is as follows. Subunit 8, of the mitochondrial membrane ATP synthase complex (F(1)F(0) ATP synthase or Complex V) that produces ATP from ADP in the presence of a proton gradient across the membrane which is generated by electron transport complexes of the respiratory chain. ATP synthase complex consist of a soluble F(1) head domain - the catalytic core - and a membrane F(1) domain - the membrane proton channel. These two domains are linked by a central stalk rotating inside the F(1) region and a stationary peripheral stalk. During catalysis, ATP synthesis in the catalytic domain of F(1) is coupled via a rotary mechanism of the central stalk subunits to proton translocation. In vivo, can only synthesize ATP although its ATP hydrolase activity can be activated artificially in vitro. Part of the complex F(0) domain. The sequence is that of ATP synthase F(0) complex subunit 8 from Bos mutus grunniens (Wild yak).